We begin with the raw amino-acid sequence, 348 residues long: Thioredoxin-related protein DsbJ (348 aa).

The N-terminal stretch at 1 to 32 (MILLQNIKRCSLKQLKVLATLLLSLSLPTLEA) is a signal peptide.

It is found in the periplasm. The chain is Thioredoxin-related protein DsbJ (dsbJ) from Chlamydia pneumoniae (Chlamydophila pneumoniae).